Here is a 3674-residue protein sequence, read N- to C-terminus: Dystrophin (3674 aa).

The interval 1–236 (MSEVSSDERE…YVTSLFQVLP (236 aa)) is actin-binding. Calponin-homology (CH) domains lie at 11-115 (DVQK…LHWQ) and 130-236 (TNSE…QVLP). The interval 59–68 (PKEKGSTRVH) is ANK2- and ANK-3 binding. Over residues 306 to 318 (SDPTRSPFPSQRL) the composition is skewed to polar residues. The disordered stretch occupies residues 306–325 (SDPTRSPFPSQRLESPEDKS). Spectrin repeat units lie at residues 335 to 443 (VNLD…NLHK), 444 to 552 (VLMD…LLQD), 555 to 663 (LKWQ…QISQ), 715 to 824 (EIRK…WLEY), 826 to 930 (NRII…ELQI), 939 to 1041 (RYQE…KLEE), 1044 to 1150 (AKLR…ALKG), 1153 to 1259 (DKTI…TLEE), 1262 to 1363 (ACWH…LLEQ), 1364 to 1459 (SIQS…LFQK), 1464 to 1564 (EQRL…QLEK), 1567 to 1672 (KLSR…LLLE), 1675 to 1774 (KHME…KASI), 1775 to 1870 (PLKE…KALE), 1873 to 1975 (HQWY…TVHE), 1988 to 2097 (EISY…KFDR), 2100 to 2204 (EKWR…RLEE), 2207 to 2314 (NILS…EIEA), 2315 to 2412 (HIKD…LRAK), 2464 to 2566 (FNRA…QLNE), 2569 to 2675 (KDST…VLEE), 2678 to 2791 (RLLQ…HLEA), 2797 to 2919 (KRLH…RKID), and 2924 to 3029 (RLQE…QLHE). Residues 1411–1909 (SDLTSHEISL…PEPQDEKKIK (499 aa)) form an interaction with SYNM region. Residues 3044 to 3077 (TSVQGPWERAISPNKVPYYINHETQTTCWDHPKM) form the WW domain. The segment at 3047–3397 (QGPWERAISP…TVLEGDNMET (351 aa)) is interaction with SYNM. Residues 3297–3353 (KHQAKCNICKECPIIGFRYRSLKHFNYDICQSCFFSGRVAKGHKMHYPMVEYCTPTT) form a ZZ-type; degenerate zinc finger. 4 residues coordinate Zn(2+): Cys-3302, Cys-3305, Cys-3326, and Cys-3329. Residues 3455–3507 (DDEHLLIQHYCQSLNQDSPLSQPRSPAQILISLESEERGELERILADLEEENR) are binds to SNTB1. Phosphoserine is present on residues Ser-3472, Ser-3479, and Ser-3489. Disordered stretches follow at residues 3517–3543 (KQQHEHKGLSPLPSPPEMMPTSPQSPR) and 3590–3674 (QAEA…EDTM). Composition is skewed to polar residues over residues 3596 to 3615 (NGTTVSSPSTSLQRSDSSQP) and 3651 to 3662 (QLNNSFPSSRGR). Residues Ser-3601, Ser-3602, Ser-3606, Ser-3612, Ser-3613, and Ser-3655 each carry the phosphoserine modification.

Interacts with SYNM. Interacts with the syntrophins SNTG1 and SNTG2. Interacts with KRT19. Component of the dystrophin-associated glycoprotein complex which is composed of three subcomplexes: a cytoplasmic complex comprised of DMD (or UTRN), DTNA and a number of syntrophins, such as SNTB1, SNTB2, SNTG1 and SNTG2, the transmembrane dystroglycan complex, and the sarcoglycan-sarcospan complex. Interacts with DAG1 (betaDAG1) with DMD; the interaction is inhibited by phosphorylation on the PPXY motif of DAG1. Interacts with SYNM; SNTA1 and SNTB1. Interacts with CMYA5. Directly interacts with ANK2 and ANK3; these interactions do not interfere with betaDAG1-binding and are necessary for proper localization in muscle cells. Identified in a dystroglycan complex that contains at least PRX, DRP2, UTRN, DMD and DAG1. Interacts with DTNB. Interacts with PGM5; the interaction is direct. Interacts with NOS1; localizes NOS1 to sarcolemma in muscle cells. In the retina, expressed in the outer plexiform layer (OPL) and around the blood vessels. Also observed at the vitreal border of the retina corresponding to the inner limiting membrane (ILM). Presynaptically localized in cone pedicles and postsynaptically in bipolar cells (at protein level).

It is found in the cell membrane. Its subcellular location is the sarcolemma. The protein resides in the cytoplasm. It localises to the cytoskeleton. The protein localises to the postsynaptic cell membrane. Its function is as follows. Anchors the extracellular matrix to the cytoskeleton via F-actin. Ligand for dystroglycan. Component of the dystrophin-associated glycoprotein complex which accumulates at the neuromuscular junction (NMJ) and at a variety of synapses in the peripheral and central nervous systems and has a structural function in stabilizing the sarcolemma. Also implicated in signaling events and synaptic transmission. This Sus scrofa (Pig) protein is Dystrophin.